Reading from the N-terminus, the 412-residue chain is Histone-lysine N-methyltransferase SUV39H1 (412 aa).

The segment at 1–89 is interaction with SIRT1; sequence MAENLKGCSV…LKCVRILKQF (89 aa). The Chromo domain maps to 43–101; the sequence is FEVEYLCDYKKIREQEYYLVKWRGYPDSESTWEPRQNLKCVRILKQFHKDLERELLRRH. The 62-residue stretch at 179-240 folds into the Pre-SET domain; the sequence is VGCECQDCLW…DCPNRVVQKG (62 aa). Zn(2+)-binding residues include Cys-181, Cys-183, Cys-186, Cys-194, Cys-195, Cys-222, Cys-226, Cys-228, and Cys-232. The 124-residue stretch at 243 to 366 folds into the SET domain; the sequence is YDLCIFRTDD…AGEELTFDYN (124 aa). 254–256 lines the S-adenosyl-L-methionine pocket; that stretch reads RGW. The segment at 255-377 is mediates interaction with MECOM; that stretch reads GWGVRTLEKI…QVDPVDMEST (123 aa). Lys-266 carries the N6-acetyllysine modification. Residues Tyr-297 and 323 to 324 each bind S-adenosyl-L-methionine; that span reads NH. Cys-326 serves as a coordination point for Zn(2+). Ser-391 is subject to Phosphoserine. One can recognise a Post-SET domain in the interval 396–412; the sequence is VRIECKCGTESCRKYLF. Zn(2+) is bound by residues Cys-400, Cys-402, and Cys-407.

It belongs to the class V-like SAM-binding methyltransferase superfamily. Histone-lysine methyltransferase family. Suvar3-9 subfamily. As to quaternary structure, interacts with H3 and H4 histones. Interacts with GFI1B, DNMT3B, CBX1, CBX4, CCAR2, MBD1, RUNX1, RUNX3, MYOD1, SMAD5 and RB1. Interacts with SBF1 through the SET domain. Interacts with HDAC1 and HDAC2 through the N-terminus and associates with the core histone deacetylase complex composed of HDAC1, HDAC2, RBBP4 and RBBP7. Component of the eNoSC complex, composed of SIRT1, SUV39H1 and RRP8. Interacts (via SET domain) with MECOM; enhances MECOM transcriptional repression activity. Interacts with LMNA; the interaction increases stability of SUV39H1. The large PER complex involved in the histone methylation is composed of at least PER2, CBX3, TRIM28, SUV39H1 and/or SUV39H2; CBX3 mediates the formation of the complex. In terms of assembly, (Microbial infection) Interacts with HTLV-1 Tax protein, leading to abrogate Tax transactivation of HTLV-1 LTR. Post-translationally, phosphorylated on serine residues, and to a lesser degree, on threonine residues. The phosphorylated form is stabilized by SBF1 and is less active in its transcriptional repressor function. Ubiquitinated by the DCX(DCAF13) E3 ubiquitin ligase complex, leading to its degradation. In terms of processing, acetylated at Lys-266, leading to inhibition of enzyme activity. SIRT1-mediated deacetylation relieves this inhibition. Post-translationally, (Microbial infection) A higher molecular weight form is also seen in M.bovis infected cells.

The protein resides in the nucleus. It is found in the nucleus lamina. It localises to the nucleoplasm. Its subcellular location is the chromosome. The protein localises to the centromere. The protein resides in the cytoplasmic vesicle. It is found in the phagosome lumen. It localises to the cell membrane. It carries out the reaction L-lysyl(9)-[histone H3] + 3 S-adenosyl-L-methionine = N(6),N(6),N(6)-trimethyl-L-lysyl(9)-[histone H3] + 3 S-adenosyl-L-homocysteine + 3 H(+). Inhibited by S-adenosyl-L-homocysteine. Negatively regulated by CCAR2. Histone methyltransferase that specifically trimethylates 'Lys-9' of histone H3 using monomethylated H3 'Lys-9' as substrate. Also weakly methylates histone H1 (in vitro). H3 'Lys-9' trimethylation represents a specific tag for epigenetic transcriptional repression by recruiting HP1 (CBX1, CBX3 and/or CBX5) proteins to methylated histones. Mainly functions in heterochromatin regions, thereby playing a central role in the establishment of constitutive heterochromatin at pericentric and telomere regions. H3 'Lys-9' trimethylation is also required to direct DNA methylation at pericentric repeats. SUV39H1 is targeted to histone H3 via its interaction with RB1 and is involved in many processes, such as repression of MYOD1-stimulated differentiation, regulation of the control switch for exiting the cell cycle and entering differentiation, repression by the PML-RARA fusion protein, BMP-induced repression, repression of switch recombination to IgA and regulation of telomere length. Component of the eNoSC (energy-dependent nucleolar silencing) complex, a complex that mediates silencing of rDNA in response to intracellular energy status and acts by recruiting histone-modifying enzymes. The eNoSC complex is able to sense the energy status of cell: upon glucose starvation, elevation of NAD(+)/NADP(+) ratio activates SIRT1, leading to histone H3 deacetylation followed by dimethylation of H3 at 'Lys-9' (H3K9me2) by SUV39H1 and the formation of silent chromatin in the rDNA locus. Recruited by the large PER complex to the E-box elements of the circadian target genes such as PER2 itself or PER1, contributes to the conversion of local chromatin to a heterochromatin-like repressive state through H3 'Lys-9' trimethylation. Functionally, (Microbial infection) Plays a role in defense against mycobacterial infections. Methylates M.tuberculosis HupB on 'Lys-140', probably methylates HupB of M.bovis also. Methylation has an inhibitory effect on mycobacterial growth in the host. Macrophages expressing about 60% SUV39H1 are slightly more susceptible to M.bovis or M.tuberculosis infection. Chaetocin (an inhibitor of this enzyme) increases macrophage survival of M.tuberculosis. This protein inhibits biofilm formation by M.tuberculosis via 'Lys-140' trimethylation. The polypeptide is Histone-lysine N-methyltransferase SUV39H1 (SUV39H1) (Homo sapiens (Human)).